A 1102-amino-acid chain; its full sequence is Voltage-gated delayed rectifier potassium channel KCNH8 (1102 aa).

At 1–225 (MPVMKGLLAP…HFSTFKAGWD (225 aa)) the chain is on the cytoplasmic side. The 73-residue stretch at 18-90 (IATRFDGTHS…LQIEKSLEEK (73 aa)) folds into the PAS domain. Residues 93–145 (FKGEIMFYKKNGAPFWCLLDIVPIKNEKGDVVLFLASFKDITDTKVKITSEDK) form the PAC domain. The segment covering 142 to 151 (SEDKKEDRTK) has biased composition (basic and acidic residues). The interval 142-162 (SEDKKEDRTKGRSRAGSHFDS) is disordered. The helical transmembrane segment at 226-246 (WLILLATFYVAVTVPYNVCFI) threads the bilayer. At 247–255 (GNEDLSTTR) the chain is on the extracellular side. A helical membrane pass occupies residues 256–276 (STTVSDIAVEILFIIDIILNF). The Cytoplasmic segment spans residues 277-298 (RTTYVSKSGQVIFEARSICIHY). A helical transmembrane segment spans residues 299-319 (VTTWFIIDLIAALPFDLLYAF). An N-linked (GlcNAc...) asparagine glycan is attached at N320. Topologically, residues 320-327 (NVTVVSLV) are extracellular. The helical; Voltage-sensor transmembrane segment at 328 to 348 (HLLKTVRLLRLLRLLQKLDRY) threads the bilayer. The Cytoplasmic segment spans residues 349 to 357 (SQHSTIVLT). A helical membrane pass occupies residues 358–378 (LLMSMFALLAHWMACIWYVIG). Over 379 to 419 (KMEREDNSLLKWEVGWLHELGKRLESPYYGNNTLGGPSIRS) the chain is Extracellular. An N-linked (GlcNAc...) asparagine glycan is attached at N409. An intramembrane region (pore-forming) is located at residues 420–440 (AYIAALYFTLSSLTSVGFGNV). Positions 434 to 439 (SVGFGN) match the Selectivity filter motif. The Extracellular segment spans residues 441–448 (SANTDAEK). The chain crosses the membrane as a helical span at residues 449–469 (IFSICTMLIGALMHALVFGNV). Over 470–1102 (TAIIQRMYSR…DVKDSKAINV (633 aa)) the chain is Cytoplasmic. Residues 551-668 (LFECASRGCL…HKFVEDIQHD (118 aa)) are cNMP-binding domain. Residues 684-693 (RLSNKSTVSQ) show a composition bias toward polar residues. Disordered stretches follow at residues 684-743 (RLSN…KKTG), 764-841 (HSPI…PEPR), and 960-991 (LVGS…YSPS). Residues 710–723 (VEDEEEEEVEEEET) show a composition bias toward acidic residues. Positions 724-737 (TSLSPIYTRGSSVS) are enriched in polar residues. Residues 968–984 (TEAHEQNPADSELHHSP) show a composition bias toward basic and acidic residues.

Belongs to the potassium channel family. H (Eag) (TC 1.A.1.20) subfamily. Kv12.1/KCNH8 sub-subfamily. The potassium channel is probably composed of a homo- or heterotetrameric complex of pore-forming alpha subunits that can associate with modulating beta subunits.

Its subcellular location is the membrane. The enzyme catalyses K(+)(in) = K(+)(out). Functionally, pore-forming (alpha) subunit of a voltage-gated delayed rectifier potassium channel that mediates outward-rectifying potassium currents. Elicits a slowly activating, non-inactivating and slowly deactivation outwards potassium current at depolarizating voltages from -30 mV to +50mV. Shows no obvious change in the activation rate from different holding potentials. Activation is strongly dependent on the pH of the external solution. This is Voltage-gated delayed rectifier potassium channel KCNH8 from Mus musculus (Mouse).